The primary structure comprises 236 residues: Phosphoribosylaminoimidazole-succinocarboxamide synthase (236 aa).

This sequence belongs to the SAICAR synthetase family.

The enzyme catalyses 5-amino-1-(5-phospho-D-ribosyl)imidazole-4-carboxylate + L-aspartate + ATP = (2S)-2-[5-amino-1-(5-phospho-beta-D-ribosyl)imidazole-4-carboxamido]succinate + ADP + phosphate + 2 H(+). Its pathway is purine metabolism; IMP biosynthesis via de novo pathway; 5-amino-1-(5-phospho-D-ribosyl)imidazole-4-carboxamide from 5-amino-1-(5-phospho-D-ribosyl)imidazole-4-carboxylate: step 1/2. The protein is Phosphoribosylaminoimidazole-succinocarboxamide synthase of Rickettsia massiliae (strain Mtu5).